A 149-amino-acid chain; its full sequence is Large ribosomal subunit protein uL15 (149 aa).

The disordered stretch occupies residues 1-57 (MRLNDPKPKTGSQHRRRRVGRGIAAGQGASCGFGMRGQKSRSGRPTRPGFEGGQNPL). Gly residues predominate over residues 23-35 (IAAGQGASCGFGM).

It belongs to the universal ribosomal protein uL15 family. In terms of assembly, part of the 50S ribosomal subunit.

Its function is as follows. Binds to the 23S rRNA. This Acaryochloris marina (strain MBIC 11017) protein is Large ribosomal subunit protein uL15.